Reading from the N-terminus, the 62-residue chain is Toxin Ct28 (62 aa).

An N-terminal signal peptide occupies residues 1–22 (MKAFYGILIILLFCSMFKLNES). 3 cysteine pairs are disulfide-bonded: C29–C51, C35–C56, and C39–C58. N61 bears the Asparagine amide mark.

Belongs to the short scorpion toxin superfamily. Potassium channel inhibitor family. Alpha-KTx 02 subfamily. Expressed by the venom gland.

It localises to the secreted. In terms of biological role, blocks voltage-gated potassium channels. The polypeptide is Toxin Ct28 (Centruroides tecomanus (Scorpion)).